The primary structure comprises 99 residues: Protein Tat (99 aa).

Residues Met-1–Asn-24 form an interaction with human CREBBP region. Positions Met-1–Gly-48 are transactivation. Zn(2+) contacts are provided by Cys-22, Cys-25, and Cys-27. A cysteine-rich region spans residues Cys-22 to Cys-37. An N6-acetyllysine; by host PCAF modification is found at Lys-28. Positions 30, 33, 34, and 37 each coordinate Zn(2+). Positions Phe-38 to Gly-48 are core. Positions Tyr-47–Pro-99 are disordered. Residues Gly-48–Thr-58 are compositionally biased toward basic residues. The short motif at Arg-49 to Arg-57 is the Nuclear localization signal, RNA-binding (TAR), and protein transduction element. Residues Arg-49–Glu-86 are interaction with the host capping enzyme RNGTT. 2 positions are modified to N6-acetyllysine; by host EP300 and GCN5L2: Lys-50 and Lys-51. Asymmetric dimethylarginine; by host PRMT6 is present on residues Arg-52 and Arg-53. A Glycyl lysine isopeptide (Lys-Gly) (interchain with G-Cter in ubiquitin) cross-link involves residue Lys-71. Residues Arg-78 to Asp-80 carry the Cell attachment site motif.

The protein belongs to the lentiviruses Tat family. In terms of assembly, interacts with host CCNT1. Associates with the P-TEFb complex composed at least of Tat, P-TEFb (CDK9 and CCNT1), TAR RNA, RNA Pol II. Recruits the HATs CREBBP, TAF1/TFIID, EP300, PCAF and GCN5L2. Interacts with host KAT5/Tip60; this interaction targets the latter to degradation. Interacts with the host deacetylase SIRT1. Interacts with host capping enzyme RNGTT; this interaction stimulates RNGTT. Binds to host KDR, and to the host integrins ITGAV/ITGB3 and ITGA5/ITGB1. Interacts with host KPNB1/importin beta-1 without previous binding to KPNA1/importin alpha-1. Interacts with EIF2AK2. Interacts with host nucleosome assembly protein NAP1L1; this interaction may be required for the transport of Tat within the nucleus, since the two proteins interact at the nuclear rim. Interacts with host C1QBP/SF2P32; this interaction involves lysine-acetylated Tat. Interacts with the host chemokine receptors CCR2, CCR3 and CXCR4. Interacts with host DPP4/CD26; this interaction may trigger an anti-proliferative effect. Interacts with host LDLR. Interacts with the host extracellular matrix metalloproteinase MMP1. Interacts with host PRMT6; this interaction mediates Tat's methylation. Interacts with, and is ubiquitinated by MDM2/Hdm2. Interacts with host PSMC3 and HTATIP2. Interacts with STAB1; this interaction may overcome SATB1-mediated repression of IL2 and IL2RA (interleukin) in T cells by binding to the same domain than HDAC1. Interacts (when acetylated) with human CDK13, thereby increasing HIV-1 mRNA splicing and promoting the production of the doubly spliced HIV-1 protein Nef. Interacts with host TBP; this interaction modulates the activity of transcriptional pre-initiation complex. Interacts with host RELA. Interacts with host PLSCR1; this interaction negatively regulates Tat transactivation activity by altering its subcellular distribution. In terms of processing, asymmetrical arginine methylation by host PRMT6 seems to diminish the transactivation capacity of Tat and affects the interaction with host CCNT1. Post-translationally, acetylation by EP300, CREBBP, GCN5L2/GCN5 and PCAF regulates the transactivation activity of Tat. EP300-mediated acetylation of Lys-50 promotes dissociation of Tat from the TAR RNA through the competitive binding to PCAF's bromodomain. In addition, the non-acetylated Tat's N-terminus can also interact with PCAF. PCAF-mediated acetylation of Lys-28 enhances Tat's binding to CCNT1. Lys-50 is deacetylated by SIRT1. Polyubiquitination by host MDM2 does not target Tat to degradation, but activates its transactivation function and fosters interaction with CCNT1 and TAR RNA. In terms of processing, phosphorylated by EIF2AK2 on serine and threonine residues adjacent to the basic region important for TAR RNA binding and function. Phosphorylation of Tat by EIF2AK2 is dependent on the prior activation of EIF2AK2 by dsRNA.

It is found in the host nucleus. The protein resides in the host nucleolus. The protein localises to the host cytoplasm. It localises to the secreted. Transcriptional activator that increases RNA Pol II processivity, thereby increasing the level of full-length viral transcripts. Recognizes a hairpin structure at the 5'-LTR of the nascent viral mRNAs referred to as the transactivation responsive RNA element (TAR) and recruits the cyclin T1-CDK9 complex (P-TEFb complex) that will in turn hyperphosphorylate the RNA polymerase II to allow efficient elongation. The CDK9 component of P-TEFb and other Tat-activated kinases hyperphosphorylate the C-terminus of RNA Pol II that becomes stabilized and much more processive. Other factors such as HTATSF1/Tat-SF1, SUPT5H/SPT5, and HTATIP2 are also important for Tat's function. Besides its effect on RNA Pol II processivity, Tat induces chromatin remodeling of proviral genes by recruiting the histone acetyltransferases (HATs) CREBBP, EP300 and PCAF to the chromatin. This also contributes to the increase in proviral transcription rate, especially when the provirus integrates in transcriptionally silent region of the host genome. To ensure maximal activation of the LTR, Tat mediates nuclear translocation of NF-kappa-B by interacting with host RELA. Through its interaction with host TBP, Tat may also modulate transcription initiation. Tat can reactivate a latently infected cell by penetrating in it and transactivating its LTR promoter. In the cytoplasm, Tat is thought to act as a translational activator of HIV-1 mRNAs. In terms of biological role, extracellular circulating Tat can be endocytosed by surrounding uninfected cells via the binding to several surface receptors such as CD26, CXCR4, heparan sulfate proteoglycans (HSPG) or LDLR. Neurons are rarely infected, but they internalize Tat via their LDLR. Through its interaction with nuclear HATs, Tat is potentially able to control the acetylation-dependent cellular gene expression. Modulates the expression of many cellular genes involved in cell survival, proliferation or in coding for cytokines or cytokine receptors. Tat plays a role in T-cell and neurons apoptosis. Tat induced neurotoxicity and apoptosis probably contribute to neuroAIDS. Circulating Tat also acts as a chemokine-like and/or growth factor-like molecule that binds to specific receptors on the surface of the cells, affecting many cellular pathways. In the vascular system, Tat binds to ITGAV/ITGB3 and ITGA5/ITGB1 integrins dimers at the surface of endothelial cells and competes with bFGF for heparin-binding sites, leading to an excess of soluble bFGF. The chain is Protein Tat from Homo sapiens (Human).